The following is a 130-amino-acid chain: Small ribosomal subunit protein uS11c (130 aa).

Belongs to the universal ribosomal protein uS11 family. In terms of assembly, part of the 30S ribosomal subunit.

It localises to the plastid. Its subcellular location is the chloroplast. The sequence is that of Small ribosomal subunit protein uS11c from Physcomitrium patens (Spreading-leaved earth moss).